Consider the following 750-residue polypeptide: MSQWYELQQLDSKFLEQVHQLYDDSFPMEIRQYLAQWLEKQDWEHAANDVSFATIRFHDLLSQLDDQYSRFSLENNFLLQHNIRKSKRNLQDNFQEDPIQMSMIIYSCLKEERKILENAQRFNQAQSGNIQSTVMLDKQKELDSKVRNVKDKVMCIEHEIKSLEDLQDEYDFKCKTLQNREHETNGVAKSDQKQEQLLLKKMYLMLDNKRKEVVHKIIELLNVTELTQNALINDELVEWKRRQQSACIGGPPNACLDQLQNWFTIVAESLQQVRQQLKKLEELEQKYTYEHDPITKNKQVLWDRTFSLFQQLIQSSFVVERQPCMPTHPQRPLVLKTGVQFTVKLRLLVKLQELNYNLKVKVLFDKDVNERNTVKGFRKFNILGTHTKVMNMEESTNGSLAAEFRHLQLKEQKNAGTRTNEGPLIVTEELHSLSFETQLCQPGLVIDLETTSLPVVVISNVSQLPSGWASILWYNMLVAEPRNLSFFLTPPCARWAQLSEVLSWQFSSVTKRGLNVDQLNMLGEKLLGPNASPDGLIPWTRFCKENINDKNFPFWLWIESILELIKKHLLPLWNDGCIMGFISKERERALLKDQQPGTFLLRFSESSREGAITFTWVERSQNGGEPDFHAVEPYTKKELSAVTFPDIIRNYKVMAAENIPENPLKYLYPNIDKDHAFGKYYSRPKEAPEPMELDGPKGTGYIKTELISVSEVHPSRLQTTDNLLPMSPEEFDEVSRIVGSVEFDSMMNTV.

The residue at position 2 (S2) is an N-acetylserine. Residues K114, K175, K296, K366, K525, and K637 each carry the N6-methyllysine modification. Residues 136 to 317 (LDKQKELDSK…LFQQLIQSSF (182 aa)) adopt a coiled-coil conformation. The SH2 domain occupies 573 to 670 (WNDGCIMGFI…ENPLKYLYPN (98 aa)). E657 is subject to ADP-ribosyl glutamic acid; by PARP14. K665 bears the N6-methyllysine mark. A Phosphotyrosine; by JAK1, JAK2 or TYK2 modification is found at Y701. A Glycyl lysine isopeptide (Lys-Gly) (interchain with G-Cter in SUMO1); alternate cross-link involves residue K703. A Glycyl lysine isopeptide (Lys-Gly) (interchain with G-Cter in SUMO2); alternate cross-link involves residue K703. E705 carries the post-translational modification ADP-ribosyl glutamic acid; by PARP14. The residue at position 708 (S708) is a Phosphoserine; by IKKE. S727 is subject to Phosphoserine; by CAMK2 and MAPK14. A Phosphoserine; by IKKE modification is found at S745. A Phosphothreonine; by IKKB modification is found at T749.

The protein belongs to the transcription factor STAT family. Isoform alpha homodimerizes upon IFN-gamma induced phosphorylation. Heterodimer with STAT2 upon IFN-alpha/beta induced phosphorylation. The heterodimer STAT1:STAT2 forms the interferon-stimulated gene factor 3 complex (ISGF3) with IRF9. Interacts (phosphorylated at Ser-727) with PIAS1; the interaction results in release of STAT1 from its target gene. Interacts with IFNAR1; the interaction requires the phosphorylation of IFNAR1 at 'Tyr-466'. Interacts with IFNAR2. Found in a complex with NMI and CREBBP/CBP. Interacts with NMI which is required for CREBBP/CBP recruitment to the complex. Interacts with PTK2/FAK1. Interacts with SRC. Interacts with ERBB4 (phosphorylated). Interacts with PARP9 and DTX3L independently of IFN-beta or IFN-gamma-mediated STAT1 'Tyr-701' phosphorylation. Interacts with histone acetyltransferase EP300/p300 in response to INF-gamma stimulation. Independently of its phosphorylation status, interacts with OTOP1. Interacts with IFNGR1. Interacts with STAT4. As to quaternary structure, (Microbial infection) Interacts with Sendai virus C', C, Y1 and Y2 proteins, preventing activation of ISRE and GAS promoter. In terms of assembly, (Microbial infection) Interacts with Nipah virus P, V and W proteins preventing activation of ISRE and GAS promoter. (Microbial infection) Interacts with Rabies virus phosphoprotein preventing activation of ISRE and GAS promoter. As to quaternary structure, (Microbial infection) Interacts with HCV core protein; the interaction results in STAT1 degradation. In terms of assembly, (Microbial infection) Interacts with ebolavirus protein VP24. (Microbial infection) Interacts with Epstein-Barr virus (EBV) tegument protein BGLF2; this interaction leads to STAT1 dephosphorylation and inhibition. As to quaternary structure, (Microbial infection) Interacts (via N-terminus) with measles V protein; this interaction inhibits STAT1 phosphorylation by Jak1 and thereby the type I interferon signaling pathway. In terms of processing, deubiquitinated by USP13; leading to STAT1 stabilization and positive regulation of type I and type II IFN signalings. Post-translationally, phosphorylated on tyrosine and serine residues in response to a variety of cytokines/growth hormones including IFN-alpha, IFN-gamma, PDGF and EGF. Activated KIT promotes phosphorylation on tyrosine residues and subsequent translocation to the nucleus. Upon EGF stimulation, phosphorylation on Tyr-701 (lacking in beta form) by JAK1, JAK2 or TYK2 promotes dimerization and subsequent translocation to the nucleus. Growth hormone (GH) activates STAT1 signaling only via JAK2. Tyrosine phosphorylated in response to constitutively activated FGFR1, FGFR2, FGFR3 and FGFR4. Phosphorylation on Ser-727 by several kinases including MAPK14, ERK1/2, CAMK2/CAMKII and CK2 in response to IFN-gamma stimulation, is required for maximal transcriptional activity. Phosphorylated on Ser-727 by CAMK2/CAMKII in response to IFN-gamma stimulation and calcium mobilization, promoting activity. Phosphorylated by CAMK2/CAMKII in response to IFN-beta stimulation and calcium mobilization in epithelial cells, promoting activity. Phosphorylation on Ser-727 promotes sumoylation though increasing interaction with PIAS. Phosphorylation on Ser-727 by PRKCD induces apoptosis in response to DNA-damaging agents. Phosphorylated on tyrosine residues when PTK2/FAK1 is activated; most likely this is catalyzed by a SRC family kinase. Dephosphorylation on tyrosine residues by PTPN2 negatively regulates interferon-mediated signaling. Upon viral infection or IFN induction, phosphorylation on Ser-708 occurs much later than phosphorylation on Tyr-701 and is required for the binding of ISGF3 on the ISREs of a subset of IFN-stimulated genes IKBKE-dependent. Phosphorylation at Tyr-701 and Ser-708 are mutually exclusive, phosphorylation at Ser-708 requires previous dephosphorylation of Tyr-701. Phosphorylation at Thr-749 by IKBKB/IKKB promotes transcriptional activation of ARID5A and IL12B by STAT1. Phosphorylation at Thr-749 restricts interferon signaling and anti-inflammatory responses and promotes innate inflammatory responses. Sumoylated with SUMO1, SUMO2 and SUMO3. Sumoylation is enhanced by IFN-gamma-induced phosphorylation on Ser-727, and by interaction with PIAS proteins. Enhances the transactivation activity. In terms of processing, ISGylated. Post-translationally, mono-ADP-ribosylated at Glu-657 and Glu-705 by PARP14; ADP-ribosylation prevents phosphorylation at Tyr-701. However, the role of ADP-ribosylation in the prevention of phosphorylation has been called into question and the lack of phosphorylation may be due to sumoylation of Lys-703. Monomethylated at Lys-525 by SETD2; monomethylation is necessary for phosphorylation at Tyr-701, translocation into the nucleus and activation of the antiviral defense. In terms of processing, (Microbial infection) Ubiquitinated by Herpes simplex virus 2 E3 ubiquitin ligase ICP22.

It localises to the cytoplasm. Its subcellular location is the nucleus. In terms of biological role, signal transducer and transcription activator that mediates cellular responses to interferons (IFNs), cytokine KITLG/SCF and other cytokines and other growth factors. Following type I IFN (IFN-alpha and IFN-beta) binding to cell surface receptors, signaling via protein kinases leads to activation of Jak kinases (TYK2 and JAK1) and to tyrosine phosphorylation of STAT1 and STAT2. The phosphorylated STATs dimerize and associate with ISGF3G/IRF-9 to form a complex termed ISGF3 transcription factor, that enters the nucleus. ISGF3 binds to the IFN stimulated response element (ISRE) to activate the transcription of IFN-stimulated genes (ISG), which drive the cell in an antiviral state. In response to type II IFN (IFN-gamma), STAT1 is tyrosine- and serine-phosphorylated. It then forms a homodimer termed IFN-gamma-activated factor (GAF), migrates into the nucleus and binds to the IFN gamma activated sequence (GAS) to drive the expression of the target genes, inducing a cellular antiviral state. Becomes activated in response to KITLG/SCF and KIT signaling. May mediate cellular responses to activated FGFR1, FGFR2, FGFR3 and FGFR4. Following bacterial lipopolysaccharide (LPS)-induced TLR4 endocytosis, phosphorylated at Thr-749 by IKBKB which promotes binding of STAT1 to the 5'-TTTGAGGC-3' sequence in the ARID5A promoter, resulting in transcriptional activation of ARID5A and subsequent ARID5A-mediated stabilization of IL6. Phosphorylation at Thr-749 also promotes binding of STAT1 to the 5'-TTTGAGTC-3' sequence in the IL12B promoter and activation of IL12B transcription. Involved in food tolerance in small intestine: associates with the Gasdermin-D, p13 cleavage product (13 kDa GSDMD) and promotes transcription of CIITA, inducing type 1 regulatory T (Tr1) cells in upper small intestine. The sequence is that of Signal transducer and activator of transcription 1-alpha/beta (STAT1) from Homo sapiens (Human).